The following is a 153-amino-acid chain: D-aminoacyl-tRNA deacylase (153 aa).

The short motif at 137–138 (GP) is the Gly-cisPro motif, important for rejection of L-amino acids element.

Belongs to the DTD family. In terms of assembly, homodimer.

It is found in the cytoplasm. It catalyses the reaction glycyl-tRNA(Ala) + H2O = tRNA(Ala) + glycine + H(+). It carries out the reaction a D-aminoacyl-tRNA + H2O = a tRNA + a D-alpha-amino acid + H(+). Functionally, an aminoacyl-tRNA editing enzyme that deacylates mischarged D-aminoacyl-tRNAs. Also deacylates mischarged glycyl-tRNA(Ala), protecting cells against glycine mischarging by AlaRS. Acts via tRNA-based rather than protein-based catalysis; rejects L-amino acids rather than detecting D-amino acids in the active site. By recycling D-aminoacyl-tRNA to D-amino acids and free tRNA molecules, this enzyme counteracts the toxicity associated with the formation of D-aminoacyl-tRNA entities in vivo and helps enforce protein L-homochirality. This is D-aminoacyl-tRNA deacylase from Herpetosiphon aurantiacus (strain ATCC 23779 / DSM 785 / 114-95).